A 172-amino-acid polypeptide reads, in one-letter code: MSRQHAYSREELLATARGELFSHSNARLPNDPMLMFDRITEIYADGGSHGKGIVNAELDIRPDLWFFGCHFLGDPVMPGCLGLDAMWQLTGFFLTWSGATPGYGRALGCGEVKFTGQVLPNAKLVRYEVEMTKIINRTLVIGQANARMLVDNREIYFAKDLRVGMFNNTESF.

Histidine 70 is a catalytic residue.

Belongs to the thioester dehydratase family. FabA subfamily. Homodimer.

The protein localises to the cytoplasm. The enzyme catalyses a (3R)-hydroxyacyl-[ACP] = a (2E)-enoyl-[ACP] + H2O. It carries out the reaction (3R)-hydroxydecanoyl-[ACP] = (2E)-decenoyl-[ACP] + H2O. It catalyses the reaction (2E)-decenoyl-[ACP] = (3Z)-decenoyl-[ACP]. It functions in the pathway lipid metabolism; fatty acid biosynthesis. In terms of biological role, necessary for the introduction of cis unsaturation into fatty acids. Catalyzes the dehydration of (3R)-3-hydroxydecanoyl-ACP to E-(2)-decenoyl-ACP and then its isomerization to Z-(3)-decenoyl-ACP. Can catalyze the dehydratase reaction for beta-hydroxyacyl-ACPs with saturated chain lengths up to 16:0, being most active on intermediate chain length. This chain is 3-hydroxydecanoyl-[acyl-carrier-protein] dehydratase, found in Xylella fastidiosa (strain M23).